A 967-amino-acid chain; its full sequence is Probable helicase DDB_G0274399 (967 aa).

The segment at 161–192 (EMTDDEDTAPTSAATHVGAPTKSTTTTTTTTT) is disordered. 357–364 (GPPGTGKT) provides a ligand contact to ATP. Disordered stretches follow at residues 529–553 (SAIPSSSASTAAATSGSSRSTQDTS) and 892–967 (QKQK…RTRR). The stretch at 890–949 (NLQKQKDIEKRKKQHKRQKQKSKENDKKKQLKKRKELNNNDNNNNNKESSNKEVQEITNA) forms a coiled coil. Residues 900 to 909 (RKKQHKRQKQ) show a composition bias toward basic residues. Positions 928 to 937 (NNDNNNNNKE) are enriched in low complexity.

The protein belongs to the DNA2/NAM7 helicase family.

Its subcellular location is the nucleus. In Dictyostelium discoideum (Social amoeba), this protein is Probable helicase DDB_G0274399.